The sequence spans 229 residues: Matrix protein (229 aa).

The short motif at 2–4 (KSI) is the dynamin binding element. Positions 11–36 (AKKEKKREKKSNHGSHSMEWESPPSY) are disordered. Positions 13-23 (KEKKREKKSNH) are enriched in basic residues. A PPXY motif motif is present at residues 33–36 (PPSY). The PTAP/PSAP motif motif lies at 42 to 45 (PSAP).

It belongs to the vesiculoviruses matrix protein family. In terms of assembly, homomultimer. Interacts with viral nucleocapsid; this interaction contributes to the virion assembly. Interacts with the viral envelope glycoprotein; this interaction contributes to the virion assembly. Interacts with host RAE1-NUP98 complex. Interacts with host NEDD4 and TSG101. Interacts with host dynamin. Interacts with host NDUFAF4; the interaction inhibits viral propagation and is independent of interferon activation. Interacts with host GTF2H5; the interaction may inhibit host transcription. In terms of processing, phosphorylated by host.

Its subcellular location is the virion. The protein localises to the host endomembrane system. It localises to the host nucleus membrane. It is found in the host nucleus. The protein resides in the host cytoplasm. Functionally, forms a double layer around the helical nucleocapsid, the inner matrix layer binding to the N helix and the outer matrix layer binding to the envelope glycoprotein. Plays a major role in assembly and budding of virion, by recruiting cellular partners of the ESCRT complexes that play a key role in releasing the budding particle from the host membrane. Condensates the ribonucleocapsid core during virus assembly. Inhibits the host mRNA nuclear export thereby inducing the shut off of cellular transcription and preventing the interferon signaling and the establishment of antiviral state in infected cells. This shutoff presumably inhibits interferon signaling and thus establishment of antiviral state in virus infected cells. Induces cell-rounding, cytoskeleton disorganization and apoptosis in infected cell. Inhibits host transcription, possibly through interaction with host DNA repair factor IIH/TFIIH GTF2H5 subunit. The chain is Matrix protein (M) from Piry virus (PIRYV).